The following is a 286-amino-acid chain: NH(3)-dependent NAD(+) synthetase (286 aa).

51–58 (GISGGVDS) provides a ligand contact to ATP. Asp57 provides a ligand contact to Mg(2+). Arg148 is a binding site for deamido-NAD(+). Thr168 contacts ATP. Glu173 is a Mg(2+) binding site. Residues Lys181 and Asp188 each coordinate deamido-NAD(+). The ATP site is built by Lys197 and Thr219. Deamido-NAD(+) is bound at residue 268–269 (HK).

This sequence belongs to the NAD synthetase family. Homodimer.

It catalyses the reaction deamido-NAD(+) + NH4(+) + ATP = AMP + diphosphate + NAD(+) + H(+). It functions in the pathway cofactor biosynthesis; NAD(+) biosynthesis; NAD(+) from deamido-NAD(+) (ammonia route): step 1/1. Its function is as follows. Catalyzes the ATP-dependent amidation of deamido-NAD to form NAD. Uses ammonia as a nitrogen source. This Paraburkholderia phytofirmans (strain DSM 17436 / LMG 22146 / PsJN) (Burkholderia phytofirmans) protein is NH(3)-dependent NAD(+) synthetase.